The chain runs to 76 residues: Omega-conotoxin-like TxO1 (76 aa).

The first 22 residues, 1-22, serve as a signal peptide directing secretion; sequence MKLTCVVIVAVLFLTVWTFATA. Positions 23 to 50 are excised as a propeptide; sequence DDSGNGLEKLFSNAHHEMKNPEASKLNE. 3 cysteine pairs are disulfide-bonded: C52–C67, C59–C70, and C66–C75.

This sequence belongs to the conotoxin O1 superfamily. Expressed by the venom duct.

It is found in the secreted. In terms of biological role, omega-conotoxins act at presynaptic membranes, they bind and block voltage-gated calcium channels (Cav). This chain is Omega-conotoxin-like TxO1, found in Conus textile (Cloth-of-gold cone).